The sequence spans 436 residues: Eukaryotic translation initiation factor 4B (436 aa).

Residues 56–98 (AKNNSNNTRSGGFGGSFGGRSRLDPALGGGSSDRREEYPVPDA) form a disordered region. Residues S65 and S71 each carry the phosphoserine modification. The region spanning 101-183 (YRAVINNIPW…RTVYVSVAAP (83 aa)) is the RRM domain. The disordered stretch occupies residues 185–406 (RGGGADVDWS…EKQNGDAKEN (222 aa)). The stretch at 190–210 (DVDWSSARGSNFQGDGREDAP) is one 1; approximate repeat. Residues 190–350 (DVDWSSARGS…DWGAARGAQF (161 aa)) form a 7 X approximate tandem repeats region. 5 tandem repeats follow at residues 211–232 (DLDW…REEV), 233–258 (DIDW…REEV), 259–284 (DIDW…REEP), 285–310 (DIDW…REEP), and 311–340 (DIDW…EPAL). Residues 329-338 (PRREREKEEP) are compositionally biased toward basic and acidic residues. The stretch at 341-350 (DWGAARGAQF) is one 7; truncated repeat. Composition is skewed to basic and acidic residues over residues 359 to 376 (TYKD…EQPK) and 397 to 406 (EKQNGDAKEN).

In terms of biological role, involved in translation initiation. May be the homolog of mammalian eIF4B and be part of an RNA helicase. STM1/TIF3 is a non-essential gene. This Saccharomyces cerevisiae (strain ATCC 204508 / S288c) (Baker's yeast) protein is Eukaryotic translation initiation factor 4B (TIF3).